A 1330-amino-acid polypeptide reads, in one-letter code: Nephrocystin-3 (1330 aa).

Residue G2 is the site of N-myristoyl glycine attachment. A coiled-coil region spans residues 83 to 207 (ELEYAAAEYE…QRLQAQGIQV (125 aa)). TPR repeat units lie at residues 471 to 504 (IPEEDDFGDVLWDIHDEQEQMETFQQASNSAHEL), 885 to 918 (CLLNLFVSQNLYKRGHFAELLSYWQFVGKDKSAM), 920 to 942 (TEYFDSLKQYEKNCEGEDNMSCL), 943 to 976 (ADLYETLGRFLKDLGLLSQAIVPLQRSLEIRETA), 985 to 1018 (AQSLHQLASVYVQWKKFGNAEQLYKQALEISENA), 1027 to 1060 (ARELEALATLYQKQNKYEQAEHFRKKSFKIHQKA), 1093 to 1126 (ARTLNELGVLYYLQNNLETADQFLKRSLEMRERV), 1135 to 1168 (AQSLNNLAALCNEKKQYDKAEELYERALDIRRRA), 1177 to 1210 (AYTVKHLAILYKKMGKLDKAVPLYELAVEIRQKS), 1219 to 1252 (ATALVNLAVLYSQMKKHVEALPLYERALKIYEDS), and 1261 to 1294 (GETLKNLAVLSYEGGDFEKAAELYKRAMEIKEAE). The disordered stretch occupies residues 1296-1330 (SLLGGKAPSRHSSSGDTFSLKTAHSPNVFLQQGQR). The span at 1305–1330 (RHSSSGDTFSLKTAHSPNVFLQQGQR) shows a compositional bias: polar residues.

As to quaternary structure, interacts with NPHP1 and INVS/NPHP2. Interacts (when myristoylated) with UNC119 and UNC119B; interaction is required for localization to cilium. Interacts with CEP164. Component of a complex containing at least ANKS6, INVS, NEK8 and NPHP3. ANKS6 may organize complex assembly by linking INVS and NPHP3 to NEK8 and INVS may target the complex to the proximal ciliary axoneme. In terms of tissue distribution, widely expressed at low level. Expressed in heart, placenta, liver, skeletal muscle, kidney and pancreas. Expressed at very low level in brain and lung.

It localises to the cell projection. It is found in the cilium. Functionally, required for normal ciliary development and function. Inhibits disheveled-1-induced canonical Wnt-signaling activity and may also play a role in the control of non-canonical Wnt signaling which regulates planar cell polarity. Probably acts as a molecular switch between different Wnt signaling pathways. Required for proper convergent extension cell movements. The polypeptide is Nephrocystin-3 (NPHP3) (Homo sapiens (Human)).